A 154-amino-acid chain; its full sequence is Large ribosomal subunit protein uL22 (154 aa).

It belongs to the universal ribosomal protein uL22 family. Part of the 50S ribosomal subunit.

Functionally, this protein binds specifically to 23S rRNA. It makes multiple contacts with different domains of the 23S rRNA in the assembled 50S subunit and ribosome. In terms of biological role, the globular domain of the protein is located near the polypeptide exit tunnel on the outside of the subunit, while an extended beta-hairpin is found that lines the wall of the exit tunnel in the center of the 70S ribosome. This chain is Large ribosomal subunit protein uL22, found in Natronomonas pharaonis (strain ATCC 35678 / DSM 2160 / CIP 103997 / JCM 8858 / NBRC 14720 / NCIMB 2260 / Gabara) (Halobacterium pharaonis).